Consider the following 63-residue polypeptide: Large ribosomal subunit protein bL32 (63 aa).

The span at 1 to 18 (MAHPKAKVSKSRRDKRRA) shows a compositional bias: basic residues. The interval 1-25 (MAHPKAKVSKSRRDKRRAQFNARTK) is disordered.

This sequence belongs to the bacterial ribosomal protein bL32 family.

This Chlorobium phaeovibrioides (strain DSM 265 / 1930) (Prosthecochloris vibrioformis (strain DSM 265)) protein is Large ribosomal subunit protein bL32.